The primary structure comprises 143 residues: Large ribosomal subunit protein uL11 (143 aa).

The protein belongs to the universal ribosomal protein uL11 family. In terms of assembly, part of the ribosomal stalk of the 50S ribosomal subunit. Interacts with L10 and the large rRNA to form the base of the stalk. L10 forms an elongated spine to which L12 dimers bind in a sequential fashion forming a multimeric L10(L12)X complex. One or more lysine residues are methylated.

Forms part of the ribosomal stalk which helps the ribosome interact with GTP-bound translation factors. The protein is Large ribosomal subunit protein uL11 of Acidovorax ebreus (strain TPSY) (Diaphorobacter sp. (strain TPSY)).